A 348-amino-acid chain; its full sequence is MAKKSLILLYGGRSAEREVSVLSAESVMRAINYDLFSVKTYFITKEGDFIKTQEFSSKPAEDVRLMTNDTVDMSRKIKPSDIYEEGAVVFPVLHGPMGEDGSIQGFLEVLKMPYVGCNILSSSLAMDKITTKRVLESAGIAQVPYVALVDGEDLEQKIQEIEEKLSYPVFTKPSNMGSSVGISKSDNQEELRASLDLAFKYDSRVLVEQGVTAREIEVGLLGNADVKSSLPGEVVKDVAFYDYQAKYIDNKITMAIPAQLPEGVVNTMRQNAEIAFRAIGGLGLSRCDFFYTEDGQVFLNELNTMPGFTQWSMYPLLWENMGLAYPDLIEKLVALAEEAFAKREAHLL.

Residues 132 to 334 form the ATP-grasp domain; it reads KRVLESAGIA…YPDLIEKLVA (203 aa). 162–217 lines the ATP pocket; that stretch reads EEKLSYPVFTKPSNMGSSVGISKSDNQEELRASLDLAFKYDSRVLVEQGVTAREIE. Positions 288, 301, and 303 each coordinate Mg(2+).

This sequence belongs to the D-alanine--D-alanine ligase family. Mg(2+) serves as cofactor. It depends on Mn(2+) as a cofactor.

It is found in the cytoplasm. It carries out the reaction 2 D-alanine + ATP = D-alanyl-D-alanine + ADP + phosphate + H(+). It participates in cell wall biogenesis; peptidoglycan biosynthesis. Its function is as follows. Cell wall formation. This Streptococcus gordonii (strain Challis / ATCC 35105 / BCRC 15272 / CH1 / DL1 / V288) protein is D-alanine--D-alanine ligase.